The chain runs to 228 residues: NAD(P)H-hydrate epimerase (228 aa).

A YjeF N-terminal domain is found at Val-9 to Ala-209. Position 53 to 57 (Asn-53 to Asp-57) interacts with (6S)-NADPHX. Positions 54 and 115 each coordinate K(+). (6S)-NADPHX-binding positions include Gly-119–Pro-125 and Asp-148. Ser-151 contacts K(+).

It belongs to the NnrE/AIBP family. Requires K(+) as cofactor.

It carries out the reaction (6R)-NADHX = (6S)-NADHX. It catalyses the reaction (6R)-NADPHX = (6S)-NADPHX. Its function is as follows. Catalyzes the epimerization of the S- and R-forms of NAD(P)HX, a damaged form of NAD(P)H that is a result of enzymatic or heat-dependent hydration. This is a prerequisite for the S-specific NAD(P)H-hydrate dehydratase to allow the repair of both epimers of NAD(P)HX. The protein is NAD(P)H-hydrate epimerase of Bordetella bronchiseptica (strain ATCC BAA-588 / NCTC 13252 / RB50) (Alcaligenes bronchisepticus).